Reading from the N-terminus, the 111-residue chain is MGLLLLLVGIGGGFGAMARFALTQATASISKQIPLGILLCNIIGSLIIGMMAAFLIETKLFNEDVSTYVRFLLVTGFLGGFTTFSSFSLDILNLLQRGEIFIAIGYIWLVS.

3 consecutive transmembrane segments (helical) span residues 2-22, 36-56, and 71-91; these read GLLL…RFAL, GILL…AFLI, and FLLV…SLDI. 2 residues coordinate Na(+): Gly-79 and Thr-82.

This sequence belongs to the fluoride channel Fluc/FEX (TC 1.A.43) family.

It is found in the cell inner membrane. The enzyme catalyses fluoride(in) = fluoride(out). Na(+) is not transported, but it plays an essential structural role and its presence is essential for fluoride channel function. Its function is as follows. Fluoride-specific ion channel. Important for reducing fluoride concentration in the cell, thus reducing its toxicity. This is Fluoride-specific ion channel FluC from Francisella tularensis subsp. holarctica (strain FTNF002-00 / FTA).